Reading from the N-terminus, the 280-residue chain is MSSYLDYPVCNRGTNIFSAKPGYHNLNHGYLSSNSCATSDSYAPDGRLAAPTSAPHQSPGLPLHHQTHLDLPFAATGNSVYGSHLDYGHHQYGLAPEQDRSYVHPQVSPLGTNMAPYTGDSCGPAAANGSQYLHFGNGEQRLQEYPDNVYARLPPQSKKESEHVEETCKTFDWMKVKRNPPKTGGASEFGVPGQHNVIRTNFTTKQLTELEKEFHFNKYLTRARRVEVAASLELNETQVKIWFQNRRMKQKKREKLGGVLVHREKASGPESSPKAKESEP.

Residues 46-65 (GRLAAPTSAPHQSPGLPLHH) form a disordered region. Residues 170-175 (TFDWMK) carry the Antp-type hexapeptide motif. The segment at residues 195 to 254 (HNVIRTNFTTKQLTELEKEFHFNKYLTRARRVEVAASLELNETQVKIWFQNRRMKQKKRE) is a DNA-binding region (homeobox). The interval 249-280 (KQKKREKLGGVLVHREKASGPESSPKAKESEP) is disordered. The span at 261-280 (VHREKASGPESSPKAKESEP) shows a compositional bias: basic and acidic residues.

It belongs to the Antp homeobox family. Labial subfamily.

The protein localises to the nucleus. Sequence-specific transcription factor which is part of a developmental regulatory system that provides cells with specific positional identities on the anterior-posterior axis. In Takifugu rubripes (Japanese pufferfish), this protein is Homeobox protein Hox-B1b (hoxb1b).